The sequence spans 181 residues: Ribosome maturation factor RimM (181 aa).

The region spanning 100 to 177 is the PRC barrel domain; that stretch reads EEGFYWMQLI…QIQVDWQLED (78 aa).

Belongs to the RimM family. In terms of assembly, binds ribosomal protein uS19.

Its subcellular location is the cytoplasm. In terms of biological role, an accessory protein needed during the final step in the assembly of 30S ribosomal subunit, possibly for assembly of the head region. Essential for efficient processing of 16S rRNA. May be needed both before and after RbfA during the maturation of 16S rRNA. It has affinity for free ribosomal 30S subunits but not for 70S ribosomes. This Hydrogenovibrio crunogenus (strain DSM 25203 / XCL-2) (Thiomicrospira crunogena) protein is Ribosome maturation factor RimM.